An 80-amino-acid chain; its full sequence is Serine protease inhibitor Kazal-type 1 (80 aa).

A signal peptide spans 1-23; the sequence is MKVAVIFLLSALALLSLAGNTFS. The 54-residue stretch at 27–80 folds into the Kazal-like domain; the sequence is TGKEASCHDAVAGCPRIYDPVCGTDGITYANECVLCFENRKRIEPVLIRKGGPC. Cystine bridges form between C33-C62, C40-C59, and C48-C80.

In terms of tissue distribution, in the genital tract, expressed only in male accessory glands including seminal vesicle, coagulating gland and prostate.

The protein localises to the secreted. Serine protease inhibitor which exhibits anti-trypsin activity. In the pancreas, protects against trypsin-catalyzed premature activation of zymogens. In terms of biological role, in the male reproductive tract, binds to sperm heads where it modulates sperm capacitance by inhibiting calcium uptake and nitrogen oxide (NO) production. This is Serine protease inhibitor Kazal-type 1 from Mus musculus (Mouse).